Consider the following 282-residue polypeptide: F-actin-capping protein subunit beta (282 aa).

The segment at 73–103 (SPWSNQFDPPLDEAGSGGVGAGGNEGAGEGA) is disordered. The span at 87–101 (GSGGVGAGGNEGAGE) shows a compositional bias: gly residues.

The protein belongs to the F-actin-capping protein beta subunit family. Component of the F-actin capping complex, composed of a heterodimer of an alpha and a beta subunit.

The protein localises to the cytoplasm. The protein resides in the cytoskeleton. Its subcellular location is the actin patch. Functionally, F-actin-capping proteins bind in a Ca(2+)-independent manner to the fast growing ends of actin filaments (barbed end) thereby blocking the exchange of subunits at these ends. Unlike other capping proteins (such as gelsolin and severin), these proteins do not sever actin filaments. This chain is F-actin-capping protein subunit beta (CAP2), found in Gibberella zeae (strain ATCC MYA-4620 / CBS 123657 / FGSC 9075 / NRRL 31084 / PH-1) (Wheat head blight fungus).